Here is an 85-residue protein sequence, read N- to C-terminus: MANIKSAIKRAKLSEERRSHNASIKSDMRTAVKTVETLVTNNDLENAKEAFKTASKKLDKAARKGLIHQNAAARQKSRLAKQVNA.

The interval 1–24 is disordered; the sequence is MANIKSAIKRAKLSEERRSHNASI.

The protein belongs to the bacterial ribosomal protein bS20 family.

Its function is as follows. Binds directly to 16S ribosomal RNA. This chain is Small ribosomal subunit protein bS20, found in Bacillus mycoides (strain KBAB4) (Bacillus weihenstephanensis).